The chain runs to 364 residues: MARRSRYISLAAVMATLLSALGVTFLLGQGRAEAHGVAMMPGSRTYLCQLDAKTGTGALDPTNPACRSALDTSGATALYNWFAVLDSNAGGRGAGYVPDGTLCSAGNRSPYDFRGYNAARSDWPRTHLTSGSTIQVNYSNWAAHPGDFRVYLTKPGWSPTSELGWDDLELIETVTDPPQRGSAGADGGHYYWDLALPSGRSGDALIFMQWVRSDSQENFFSCSDVVFDGGNGEVTGIRGSGGTPTPTPTPTTPPTTPPPTHSGSCMAVYNVENSWSGGFQGSVEVMNHGTEPLNGWAVQWKPGNGTTLGGVWNGSPTRGTDGTVKVRNVDHNRVVPPDGSVTFGFTATSTGNDFPVGTIGCVAP.

The first 34 residues, 1 to 34 (MARRSRYISLAAVMATLLSALGVTFLLGQGRAEA), serve as a signal peptide directing secretion. Cu cation-binding residues include His35 and His144. One can recognise a Chitin-binding type-4 domain in the interval 35-225 (HGVAMMPGSR…QENFFSCSDV (191 aa)). The segment at 234–261 (VTGIRGSGGTPTPTPTPTTPPTTPPPTH) is disordered. Residues 245–260 (TPTPTPTTPPTTPPPT) show a composition bias toward pro residues. In terms of domain architecture, CBM2 spans 258-364 (PPTHSGSCMA…PVGTIGCVAP (107 aa)).

It depends on Cu(2+) as a cofactor.

The protein resides in the secreted. It carries out the reaction [(1-&gt;4)-beta-D-glucosyl]n+m + reduced acceptor + O2 = [(1-&gt;4)-beta-D-glucosyl]m-1-(1-&gt;4)-D-glucono-1,5-lactone + [(1-&gt;4)-beta-D-glucosyl]n + acceptor + H2O.. It participates in glycan metabolism; cellulose degradation. Its function is as follows. Involved in the degradation of lignocellulosic biomass. Catalyzes the oxidative cleavage of glycosidic bonds in cellulosic substrates via a copper-dependent mechanism. Degrades phosphoric acid swollen cellulose (PASC) to oxidized cellooligosaccharides with degrees of polymerization of 4-8. Also shows activity on agricultural fiber paper pulps such as flax pulp. Is not active on chitin. This Streptomyces ambofaciens (strain ATCC 23877 / 3486 / DSM 40053 / JCM 4204 / NBRC 12836 / NRRL B-2516) protein is Lytic cellulose monooxygenase.